We begin with the raw amino-acid sequence, 55 residues long: Large ribosomal subunit protein bL33 (55 aa).

It belongs to the bacterial ribosomal protein bL33 family.

The sequence is that of Large ribosomal subunit protein bL33 from Bradyrhizobium sp. (strain BTAi1 / ATCC BAA-1182).